Consider the following 105-residue polypeptide: UPF0122 protein OB1530 (105 aa).

This sequence belongs to the UPF0122 family.

Might take part in the signal recognition particle (SRP) pathway. This is inferred from the conservation of its genetic proximity to ftsY/ffh. May be a regulatory protein. This is UPF0122 protein OB1530 from Oceanobacillus iheyensis (strain DSM 14371 / CIP 107618 / JCM 11309 / KCTC 3954 / HTE831).